Consider the following 218-residue polypeptide: Uracil-DNA glycosylase (218 aa).

D68 acts as the Proton acceptor in catalysis.

Belongs to the uracil-DNA glycosylase (UDG) superfamily. UNG family. Homodimer. Interacts with protein OPG148. Component of the Uracil-DNA glycosylase(UDG)-OPG148-polymerase complex; OPG148 and UDG form a heterodimeric processivity factor that associates with OPG71 to form the processive polymerase holoenzyme.

The catalysed reaction is Hydrolyzes single-stranded DNA or mismatched double-stranded DNA and polynucleotides, releasing free uracil.. Its function is as follows. Plays an essential role in viral replication as a component of the DNA polymerase processivity factor. Excises uracil residues from the DNA which can arise as a result of misincorporation of dUMP residues by DNA polymerase or due to deamination of cytosine. This is Uracil-DNA glycosylase (OPG116) from Homo sapiens (Human).